The primary structure comprises 306 residues: MKHFLTLRDFSKEEILSLVNHASELKKEPKKLLQDKTLAMIFEKNSTRTRMAFELAITELGGKALFLSSNDLQLSRGEPVKDTARVIGAMVDFVMMRVNKHETLLEFARYSKAPVINALSELYHPTQVLGDLFTIKEWNKMQNGIAKVAFIGDSNNMCNSWLITAAILGFEISIAMPKNYKISPEIWEFAMKQALISGAKISLGYDKFEALKDKDVVITDTWVSMGEENEKERKIKEFEGFMIDEKAMSVANKDAILLHCLPAYRGYEVSEEIFEKHADVIFEEARNRLYVVKALLCFLDNQRGRE.

Carbamoyl phosphate-binding positions include 46-49, Gln73, Arg97, and 124-127; these read STRT and HPTQ. Residues Asn156, Asp220, and 224-225 each bind L-ornithine; that span reads SM. Carbamoyl phosphate-binding positions include 260 to 261 and Arg288; that span reads CL.

This sequence belongs to the aspartate/ornithine carbamoyltransferase superfamily. OTCase family. In terms of assembly, homohexamer; dimer of trimers.

It is found in the cytoplasm. The enzyme catalyses carbamoyl phosphate + L-ornithine = L-citrulline + phosphate + H(+). The protein operates within amino-acid biosynthesis; L-arginine biosynthesis; L-arginine from L-ornithine and carbamoyl phosphate: step 1/3. Reversibly catalyzes the transfer of the carbamoyl group from carbamoyl phosphate (CP) to the N(epsilon) atom of ornithine (ORN) to produce L-citrulline, which is a substrate for argininosuccinate synthetase (ArgG) involved in the final step in arginine biosynthesis. This chain is Ornithine carbamoyltransferase, anabolic, found in Campylobacter jejuni subsp. jejuni serotype O:2 (strain ATCC 700819 / NCTC 11168).